The chain runs to 216 residues: Pyrophosphatase PpaX (216 aa).

The Nucleophile role is filled by Asp-9.

Belongs to the HAD-like hydrolase superfamily. PpaX family. It depends on Mg(2+) as a cofactor.

It carries out the reaction diphosphate + H2O = 2 phosphate + H(+). In terms of biological role, hydrolyzes pyrophosphate formed during P-Ser-HPr dephosphorylation by HPrK/P. Might play a role in controlling the intracellular pyrophosphate pool. This Bacillus cereus (strain G9842) protein is Pyrophosphatase PpaX.